Reading from the N-terminus, the 122-residue chain is Large ribosomal subunit protein bL19 (122 aa).

This sequence belongs to the bacterial ribosomal protein bL19 family.

Functionally, this protein is located at the 30S-50S ribosomal subunit interface and may play a role in the structure and function of the aminoacyl-tRNA binding site. This Chlamydia abortus (strain DSM 27085 / S26/3) (Chlamydophila abortus) protein is Large ribosomal subunit protein bL19.